Here is a 373-residue protein sequence, read N- to C-terminus: Dual-specificity RNA methyltransferase RlmN (373 aa).

Catalysis depends on Glu94, which acts as the Proton acceptor. The Radical SAM core domain maps to 100–339; that stretch reads EDDRATLCVS…VIVRKTRGDD (240 aa). Cys107 and Cys344 form a disulfide bridge. [4Fe-4S] cluster is bound by residues Cys114, Cys118, and Cys121. S-adenosyl-L-methionine is bound by residues 168–169, Ser200, 222–224, and Asn301; these read GE and SIH. The active-site S-methylcysteine intermediate is the Cys344.

This sequence belongs to the radical SAM superfamily. RlmN family. The cofactor is [4Fe-4S] cluster.

The protein resides in the cytoplasm. It catalyses the reaction adenosine(2503) in 23S rRNA + 2 reduced [2Fe-2S]-[ferredoxin] + 2 S-adenosyl-L-methionine = 2-methyladenosine(2503) in 23S rRNA + 5'-deoxyadenosine + L-methionine + 2 oxidized [2Fe-2S]-[ferredoxin] + S-adenosyl-L-homocysteine. The catalysed reaction is adenosine(37) in tRNA + 2 reduced [2Fe-2S]-[ferredoxin] + 2 S-adenosyl-L-methionine = 2-methyladenosine(37) in tRNA + 5'-deoxyadenosine + L-methionine + 2 oxidized [2Fe-2S]-[ferredoxin] + S-adenosyl-L-homocysteine. In terms of biological role, specifically methylates position 2 of adenine 2503 in 23S rRNA and position 2 of adenine 37 in tRNAs. m2A2503 modification seems to play a crucial role in the proofreading step occurring at the peptidyl transferase center and thus would serve to optimize ribosomal fidelity. The protein is Dual-specificity RNA methyltransferase RlmN of Shewanella woodyi (strain ATCC 51908 / MS32).